The sequence spans 2014 residues: Leucine-rich repeat serine/threonine-protein kinase 1 (2014 aa).

5 ANK repeats span residues 51-81, 86-116, 119-148, 152-182, and 193-222; these read QCPS…CEES, EKGQ…ELPT, TDDN…GPCT, LLNW…DPEN, and IVRL…YFCS. LRR repeat units follow at residues 279 to 300, 303 to 324, 330 to 351, 353 to 374, 381 to 402, 405 to 426, 427 to 447, 451 to 472, 474 to 495, 498 to 519, 549 to 570, 572 to 594, and 596 to 617; these read QITE…IPWG, NLKK…QSSD, RLLE…FLHL, KLQK…ENAT, KLQE…FMHS, SLTS…WSCP, LKCC…MAVF, HLRD…LFQL, ALMF…EKWT, QLKT…LKTK, SLEV…VCLL, NLSE…LGQL, and NLWQ…VRKE. The region spanning 632 to 826 is the Roc domain; sequence KAEKCKLMKM…QLIFHVTCNM (195 aa). The GDP site is built by Pro-647, Arg-648, Gly-650, Lys-651, Ser-652, Thr-653, Glu-670, His-758, Asp-760, Cys-806, and Lys-807. Positions 840 to 1237 constitute a COR domain; it reads GRLIPRSYIS…PARLFLENSK (398 aa). Thr-1061 carries the phosphothreonine modification. 2 positions are modified to phosphoserine: Ser-1064 and Ser-1074. Thr-1075 is subject to Phosphothreonine. Residues 1242-1525 enclose the Protein kinase domain; sequence EGENSILGQG…VVSQMKDPTF (284 aa). Residues 1248–1256 and Lys-1270 contribute to the ATP site; that span reads LGQGGSGTV. The active-site Proton acceptor is the Asp-1386. WD repeat units follow at residues 1539–1579, 1582–1622, 1623–1668, 1693–1729, 1730–1778, 1779–1948, and 1950–1986; these read AFFS…RMTC, MKLS…QALD, TPAV…SCSY, VKAM…RLEP, YAAP…YFCG, DPNP…AVLK, and RELN…AVWR. Positions 1791–1906 are WD40 loop; involved in dimer stabilization; that stretch reads PSVLETPGSH…MDGETFSQHL (116 aa). A disordered region spans residues 1839-1895; that stretch reads SMSSYSSSPPHQDPRSPSSLPSSLTSYSSVPFSANYEDSDRLQEPSVTSDRTEHDLS. The segment covering 1853-1871 has biased composition (low complexity); that stretch reads RSPSSLPSSLTSYSSVPFS.

It belongs to the protein kinase superfamily. TKL Ser/Thr protein kinase family. ROCO subfamily. As to quaternary structure, homodimer. The homodimer is autoinhibited and stabilized by its N-terminal residues and ANK repeats. Interacts with CSK. It depends on Mg(2+) as a cofactor. Mn(2+) serves as cofactor. In terms of processing, autophosphorylated. Autophosphorylation in inhibited in its dimeric state. Phosphorylated by protein kinase C isozymes PRKCA, PRKCB, PRKCG, PRKCE, PRKCZ and PRKCT at Ser-1064, Ser-1074 and Thr-1075. Phosphorylation at these residues activates the kinase activity of LRRK1 to phosphorylate RAB7A. Expressed in osteoclasts and bone marrow stromal cells.

Its subcellular location is the cytoplasm. It localises to the cell membrane. The catalysed reaction is L-seryl-[protein] + ATP = O-phospho-L-seryl-[protein] + ADP + H(+). It carries out the reaction L-threonyl-[protein] + ATP = O-phospho-L-threonyl-[protein] + ADP + H(+). With respect to regulation, activated by phosphorylation by PKC. Binds both GTP and GDP; binding of GTP stimulates kinase activity. Sterically autoinhibited in its dimeric state. Serine/threonine-protein kinase which phosphorylates RAB proteins involved in intracellular trafficking. Phosphorylates RAB7A; this activity is dependent on protein kinase C (PKC) activation. Plays a role in the negative regulation of bone mass, acting through the maturation of osteoclasts. This is Leucine-rich repeat serine/threonine-protein kinase 1 from Mus musculus (Mouse).